The sequence spans 893 residues: Dystroglycan 1 (893 aa).

A signal peptide spans 1-27; that stretch reads MSVDNWLLHPLWGQTFLLLLSVAVAQA. The tract at residues 28–406 is required for laminin recognition; sequence HWPSEPSEAV…GQIRPTLTIP (379 aa). An O-glycosylated at one site region spans residues 47-69; the sequence is SMHSVLSDFQEAVPTVVGIPDGT. An N-linked (GlcNAc...) asparagine glycan is attached at N139. Cysteines 180 and 262 form a disulfide. Residues 314 to 483 form a mucin-like domain region; that stretch reads ATPTPVTAIG…PPTRIRTTTS (170 aa). O-linked (Man6P...) threonine glycosylation is found at T315, T317, and T377. Residues 379-498 form a disordered region; that stretch reads TLGPIQPTRV…GEPNQRPELK (120 aa). A compositionally biased stretch (low complexity) spans 409–445; that stretch reads VEPTAVITPPTTTTKKPRVSTPKPATPSTDSSTTTTR. The tract at residues 461–483 is O-glycosylated at seven sites with GalNAc; it reads TTKAPITRLETASPPTRIRTTTS. The 110-residue stretch at 601-710 folds into the Peptidase S72 domain; the sequence is KAPARFKARL…LSIAVTGSGS (110 aa). 3 N-linked (GlcNAc...) asparagine glycosylation sites follow: N639, N647, and N659. Residues 652–751 lie on the Extracellular side of the membrane; that stretch reads SIVVEWTNNT…SSEDDVYLHT (100 aa). A disulfide bond links C667 and C711. Residues 722 to 744 are disordered; sequence PSPGSSAAPATEVPDRDPEKSSE. A compositionally biased stretch (basic and acidic residues) spans 734-744; sequence VPDRDPEKSSE. The helical transmembrane segment at 752 to 772 threads the bilayer; it reads VIPAVVVAAILLIAGIIAMIC. Topologically, residues 773–893 are cytoplasmic; the sequence is YRKKRKGKLT…YRSPPPYVPP (121 aa). The Nuclear localization signal signature appears at 774-780; sequence RKKRKGK. T788 is subject to Phosphothreonine. Residues 817 to 893 form a required for interaction with CAV3 region; the sequence is LQEEKAPLPP…YRSPPPYVPP (77 aa). Residues 821 to 893 are disordered; the sequence is KAPLPPPEYP…YRSPPPYVPP (73 aa). A compositionally biased stretch (polar residues) spans 830–844; sequence PNQSMPETTPLNQDT. Residues 857 to 868 are compositionally biased toward pro residues; the sequence is NAPPYQPPPPFT. Residues 878–893 are required for binding DMD and UTRN; the sequence is PKNMTPYRSPPPYVPP. Positions 887–890 match the PPXY motif motif; that stretch reads PPPY. Y890 carries the post-translational modification Phosphotyrosine; by SRC.

In terms of assembly, monomer. Heterodimer of alpha- and beta-dystroglycan subunits which are the central components of the dystrophin-glycoprotein complex. This complex then can form a dystrophin-associated glycoprotein complex (DGC) which is composed of three subcomplexes: a cytoplasmic complex comprised of DMD (or UTRN), DTNA and a number of syntrophins, such as SNTB1, SNTB2, SNTG1 and SNTG2, the transmembrane dystroglycan complex, and the sarcoglycan-sarcospan complex. Interacts (via the N-terminal of alphaDAG1) with LARGE1; the interaction enhances laminin binding. Interacts with SGCD. Interacts with AGR2 and AGR3. Interacts (betaDAG1) with DMD; the interaction is inhibited by phosphorylation on the PPXY motif. Interacts (betaDAG1, via its PPXY motif) with UTRN (via its WWW and ZZ domains); the interaction is inhibited by phosphorylation on the PPXY motif. Interacts (betaDAG1, via its phosphorylated PPXY motif) with the SH2 domain-containing proteins, FYN, CSK, NCK and SHC. Interacts (betaDAG1) with CAV3 (via a central WW-like domain); the interaction disrupts the binding of DMD. BetaDAG1 directly interacts with ANK3, but not with ANK2; this interaction does not interfere with DMD-binding and is required for retention at costameres. Identified in a dystroglycan complex that contains at least PRX, DRP2, UTRN, DMD and DAG1. Interacts with POMGNT1. BetaDAG1 interacts with CD93. In terms of processing, O-glycosylated. POMGNT1 catalyzes the initial addition of N-acetylglucosamine, giving rise to the GlcNAc(beta1-2)Man(alpha1-)O-Ser/Thr moiety and thus providing the necessary basis for the addition of further carbohydrate moieties. Heavily O-glycosylated comprising of up to two thirds of its mass and the carbohydrate composition differs depending on tissue type. Mucin-type O-glycosylation is important for ligand binding activity. O-mannosylation is found in high abundance in both brain and muscle where the most abundant glycan is Sia-alpha-2-3-Gal-beta-1-4-Glc-NAc-beta-1-2-Man. In muscle, glycosylation on Thr-315, Thr-317, Thr-379 by a phosphorylated O-mannosyl glycan with the structure 2-(N-acetylamido)-2-deoxygalactosyl-beta-1,3-2-(N-acetylamido)-2-deoxyglucosyl-beta-1,4-6-phosphomannose is mediated by like-acetylglucosaminyltransferase (LARGE1) protein amd is required for laminin binding. O-glycosylated in the N-terminal region with a core 1 or possibly core 8 glycan. The brain form displays a unique glycosylation pattern which is absent in other tissues; this form shows enhanced binding to laminin LAMA5 compared to the skeletal muscle form. Post-translationally, N-glycosylated. Autolytic cleavage produces the alpha and beta subunits. In cutaneous cells, as well as in certain pathological conditions, shedding of beta-dystroglycan can occur releasing a peptide of about 30 kDa. In terms of processing, SRC-mediated phosphorylation of the PPXY motif of the beta subunit recruits SH2 domain-containing proteins, but inhibits binding to WWW domain-containing proteins, DMD and UTRN. This phosphorylation also inhibits nuclear entry. Detected in brain and kidney (at protein level). Detected in sciatic nerve (at protein level). Expressed in neurons and muscle cells (at protein level). Expressed in a variety of tissues. In brain, expressed in the hippocampal formation, the olfactory bulb, the cerebellum and the thalamus. In the peripheral nerve system, expressed in Schwann cells.

Its subcellular location is the secreted. The protein localises to the extracellular space. It is found in the cell membrane. The protein resides in the cytoplasm. It localises to the cytoskeleton. Its subcellular location is the nucleus. The protein localises to the nucleoplasm. It is found in the sarcolemma. The protein resides in the postsynaptic cell membrane. Functionally, the dystroglycan complex is involved in a number of processes including laminin and basement membrane assembly, sarcolemmal stability, cell survival, peripheral nerve myelination, nodal structure, cell migration, and epithelial polarization. Its function is as follows. Extracellular peripheral glycoprotein that acts as a receptor for extracellular matrix proteins containing laminin-G domains, and for certain adenoviruses. Receptor for laminin-2 (LAMA2) and agrin in peripheral nerve Schwann cells. Also acts as a receptor for laminin LAMA5. Transmembrane protein that plays important roles in connecting the extracellular matrix to the cytoskeleton. Acts as a cell adhesion receptor in both muscle and non-muscle tissues. Receptor for both DMD and UTRN and, through these interactions, scaffolds axin to the cytoskeleton. Also functions in cell adhesion-mediated signaling and implicated in cell polarity. The chain is Dystroglycan 1 from Mus musculus (Mouse).